Here is an 87-residue protein sequence, read N- to C-terminus: Cell division topological specificity factor (87 aa).

It belongs to the MinE family.

Functionally, prevents the cell division inhibition by proteins MinC and MinD at internal division sites while permitting inhibition at polar sites. This ensures cell division at the proper site by restricting the formation of a division septum at the midpoint of the long axis of the cell. This Blochmanniella pennsylvanica (strain BPEN) protein is Cell division topological specificity factor.